We begin with the raw amino-acid sequence, 257 residues long: uncharacterized protein (257 aa).

The first 22 residues, 1–22 (MRYLKRLSWYISILILIVVIAG), serve as a signal peptide directing secretion. A lipid anchor (N-palmitoyl cysteine) is attached at Cys-23. Cys-23 is lipidated: S-diacylglycerol cysteine.

This sequence belongs to the staphylococcal tandem lipoprotein family.

The protein localises to the cell membrane. This is an uncharacterized protein from Staphylococcus aureus (strain N315).